The primary structure comprises 405 residues: MRSVQEHQRVVAEMMRACRPITVPLTQAQGLVLGGDVVAPLSLPVFDNSAMDGYAVRAEDTSGATPQNPVMLPVAEDIPAGRADMLTLQPVTAHRIMTGAPVPTGATAIVPVEATDGGVDSVAIRQQATPGKHIRRSGEDVAAGTTVLHNGQIVTPAVLGLAAALGLAELPVLPRQRVLVISTGSELASPGTPLQPGQIYESNSIMLAAAVRDAGAAVVATATAGDDVAQFGAILDRYAVDADLIITSGGVSAGAYEVVKDAFGSADYRGGDHGVEFVKVAMQPGMPQGVGRVAGTPIVTLPGNPVSALVSFEVFIRPPLRMAMGLPDPYRPHRSAVLTASLTSPRGKRQFRRAILDHQAGTVISYGPPASHHLRWLASANGLLDIPEDVVEVAAGTQLQVWDLT.

It belongs to the MoeA family. Mg(2+) is required as a cofactor.

The enzyme catalyses adenylyl-molybdopterin + molybdate = Mo-molybdopterin + AMP + H(+). It functions in the pathway cofactor biosynthesis; molybdopterin biosynthesis. In terms of biological role, catalyzes the insertion of molybdate into adenylated molybdopterin with the concomitant release of AMP. In Mycobacterium tuberculosis (strain CDC 1551 / Oshkosh), this protein is Molybdopterin molybdenumtransferase 2 (moaE2).